The sequence spans 467 residues: Glutamate--tRNA ligase (467 aa).

Positions 14 to 24 (PSPTGFLHLGG) match the 'HIGH' region motif. The span at 124–134 (PRYDGTWRPEP) shows a compositional bias: basic and acidic residues. A disordered region spans residues 124–156 (PRYDGTWRPEPGKTLPPVPAGRKPVVRFKNPQD). Positions 246–250 (KLSKR) match the 'KMSKS' region motif. Lysine 249 is a binding site for ATP.

It belongs to the class-I aminoacyl-tRNA synthetase family. Glutamate--tRNA ligase type 1 subfamily. As to quaternary structure, monomer.

The protein localises to the cytoplasm. The enzyme catalyses tRNA(Glu) + L-glutamate + ATP = L-glutamyl-tRNA(Glu) + AMP + diphosphate. Functionally, catalyzes the attachment of glutamate to tRNA(Glu) in a two-step reaction: glutamate is first activated by ATP to form Glu-AMP and then transferred to the acceptor end of tRNA(Glu). The polypeptide is Glutamate--tRNA ligase (Bordetella petrii (strain ATCC BAA-461 / DSM 12804 / CCUG 43448)).